The primary structure comprises 490 residues: Katanin p60 ATPase-containing subunit A-like 1 (490 aa).

Met1 carries the N-acetylmethionine modification. Residues 87–182 form a disordered region; the sequence is SCQDEPVRDP…ASDGEIPKFD (96 aa). A compositionally biased stretch (basic and acidic residues) spans 116–127; it reads SNREVRPLRKDM. Residues 128-139 show a composition bias toward low complexity; that stretch reads AGVGARGPVGRA. The span at 143–169 shows a compositional bias: basic and acidic residues; the sequence is SKSEKPSTSRDKDNRARGKDDKGRKNM. Ser174 bears the Phosphoserine mark. 248–255 serves as a coordination point for ATP; the sequence is GPPGTGKT.

This sequence belongs to the AAA ATPase family. Katanin p60 subunit A1 subfamily. A-like 1 sub-subfamily. As to quaternary structure, interacts with KATNB1 and KATNBL1.

It is found in the cytoplasm. It localises to the cytoskeleton. Its subcellular location is the spindle pole. The protein resides in the spindle. It carries out the reaction n ATP + n H2O + a microtubule = n ADP + n phosphate + (n+1) alpha/beta tubulin heterodimers.. Functionally, regulates microtubule dynamics in Sertoli cells, a process that is essential for spermiogenesis and male fertility. Severs microtubules in an ATP-dependent manner, promoting rapid reorganization of cellular microtubule arrays. Has microtubule-severing activity in vitro. In Otolemur garnettii (Small-eared galago), this protein is Katanin p60 ATPase-containing subunit A-like 1.